We begin with the raw amino-acid sequence, 941 residues long: Cilia- and flagella-associated protein 69 (941 aa).

Low complexity predominate over residues 1-14 (MWTEEAGATAEAQE). A disordered region spans residues 1–26 (MWTEEAGATAEAQESGIRNKSSSSSQ). Over residues 16-26 (GIRNKSSSSSQ) the composition is skewed to polar residues.

In terms of tissue distribution, highly expressed in the testis, specifically in sperm (at protein level). Expressed in the brain, kidney, liver, lung, and intestine.

The protein localises to the cell projection. It is found in the cilium. Its subcellular location is the flagellum. Cilium- and flagellum-associated protein. In the olfactory epithelium, regulates the speed of activation and termination of the odor response and thus contributes to the robustness of olfactory transduction pathways. Required for sperm flagellum assembly and stability. The polypeptide is Cilia- and flagella-associated protein 69 (Homo sapiens (Human)).